Here is a 179-residue protein sequence, read N- to C-terminus: Peptidyl-tRNA hydrolase (179 aa).

TRNA is bound at residue Tyr15. His20 (proton acceptor) is an active-site residue. The tRNA site is built by Tyr66, Asn68, and Asn114.

Belongs to the PTH family. As to quaternary structure, monomer.

The protein resides in the cytoplasm. It catalyses the reaction an N-acyl-L-alpha-aminoacyl-tRNA + H2O = an N-acyl-L-amino acid + a tRNA + H(+). In terms of biological role, hydrolyzes ribosome-free peptidyl-tRNAs (with 1 or more amino acids incorporated), which drop off the ribosome during protein synthesis, or as a result of ribosome stalling. Catalyzes the release of premature peptidyl moieties from peptidyl-tRNA molecules trapped in stalled 50S ribosomal subunits, and thus maintains levels of free tRNAs and 50S ribosomes. This chain is Peptidyl-tRNA hydrolase, found in Chlamydia trachomatis serovar L2 (strain ATCC VR-902B / DSM 19102 / 434/Bu).